A 916-amino-acid chain; its full sequence is Probable dipeptidyl-aminopeptidase B (916 aa).

Disordered regions lie at residues 1–35 and 67–86; these read MGRT…SGLS and DAEA…KLGS. Over 1-92 the chain is Cytoplasmic; the sequence is MGRTGDLENA…KLGSGSRTRQ (92 aa). The span at 21 to 35 shows a compositional bias: low complexity; it reads TSGTSSRSSTDSGLS. The chain crosses the membrane as a helical; Signal-anchor for type II membrane protein span at residues 93-113; that stretch reads IFWALVILCLGGWVLALVLFL. Over 114–916 the chain is Vacuolar; sequence THGRASSQTA…VKRSVPAFAH (803 aa). N-linked (GlcNAc...) asparagine glycans are attached at residues Asn-349 and Asn-640. Ser-754 serves as the catalytic Charge relay system. N-linked (GlcNAc...) asparagine glycosylation is found at Asn-808 and Asn-813. Catalysis depends on charge relay system residues Asp-831 and His-864.

The protein belongs to the peptidase S9B family.

Its subcellular location is the vacuole membrane. It catalyses the reaction Release of an N-terminal dipeptide, Xaa-Yaa-|-Zaa-, from a polypeptide, preferentially when Yaa is Pro, provided Zaa is neither Pro nor hydroxyproline.. Functionally, type IV dipeptidyl-peptidase which removes N-terminal dipeptides sequentially from polypeptides having unsubstituted N-termini provided that the penultimate residue is proline. The chain is Probable dipeptidyl-aminopeptidase B (dapB) from Aspergillus flavus (strain ATCC 200026 / FGSC A1120 / IAM 13836 / NRRL 3357 / JCM 12722 / SRRC 167).